The primary structure comprises 79 residues: Putative defensin-like protein 203 (79 aa).

The signal sequence occupies residues 1–27; sequence MAKLIVNFSALLMIILLVSNGLPKAVA. Intrachain disulfides connect cysteine 30–cysteine 79, cysteine 40–cysteine 64, cysteine 49–cysteine 73, and cysteine 53–cysteine 75.

It belongs to the DEFL family.

The protein localises to the secreted. The polypeptide is Putative defensin-like protein 203 (Arabidopsis thaliana (Mouse-ear cress)).